The primary structure comprises 407 residues: [Pyruvate dehydrogenase (acetyl-transferring)] kinase isozyme 2, mitochondrial (407 aa).

Positions 135–364 (LEYKDTYGDD…DAVIYLKALS (230 aa)) constitute a Histidine kinase domain. Y215 and Y216 each carry phosphotyrosine. Residues 251–258 (ELFKNAMR), D290, 309–310 (ST), and 325–330 (GFGYGL) contribute to the ATP site. K376 carries the N6-succinyllysine modification.

This sequence belongs to the PDK/BCKDK protein kinase family. In terms of assembly, homodimer, and heterodimer with PDK1. Interacts with the pyruvate dehydrogenase complex subunit DLAT, and is part of the multimeric pyruvate dehydrogenase complex that contains multiple copies of pyruvate dehydrogenase (E1), dihydrolipoamide acetyltransferase (DLAT, E2) and lipoamide dehydrogenase (DLD, E3). Expressed in many tissues, with the highest level in heart and skeletal muscle, intermediate levels in brain, kidney, pancreas and liver, and low levels in placenta and lung.

It localises to the mitochondrion matrix. It carries out the reaction L-seryl-[pyruvate dehydrogenase E1 alpha subunit] + ATP = O-phospho-L-seryl-[pyruvate dehydrogenase E1 alpha subunit] + ADP + H(+). With respect to regulation, activity is enhanced by binding to the pyruvate dehydrogenase subunit DLAT. Inhibited by ADP and pyruvate; these compounds interfere with DLAT binding and thereby inhibit kinase activity. Inhibited by dichloroacetate. Inhibited by AZD7545; this compound interferes with DLAT binding and thereby inhibits kinase activity. Functionally, kinase that plays a key role in the regulation of glucose and fatty acid metabolism and homeostasis via phosphorylation of the pyruvate dehydrogenase subunits PDHA1 and PDHA2. This inhibits pyruvate dehydrogenase activity, and thereby regulates metabolite flux through the tricarboxylic acid cycle, down-regulates aerobic respiration and inhibits the formation of acetyl-coenzyme A from pyruvate. Inhibition of pyruvate dehydrogenase decreases glucose utilization and increases fat metabolism. Mediates cellular responses to insulin. Plays an important role in maintaining normal blood glucose levels and in metabolic adaptation to nutrient availability. Via its regulation of pyruvate dehydrogenase activity, plays an important role in maintaining normal blood pH and in preventing the accumulation of ketone bodies under starvation. Plays a role in the regulation of cell proliferation and in resistance to apoptosis under oxidative stress. Plays a role in p53/TP53-mediated apoptosis. This Homo sapiens (Human) protein is [Pyruvate dehydrogenase (acetyl-transferring)] kinase isozyme 2, mitochondrial (PDK2).